Reading from the N-terminus, the 368-residue chain is Membrane glycoprotein UL18 (368 aa).

The first 19 residues, 1-19 (MMTMWCLTLFVLWMLRVVG), serve as a signal peptide directing secretion. The chain crosses the membrane as a helical span at residues 326-346 (ISSVLLALLLCALLFAFLHYF).

Interacts with host LILRB1.

The protein localises to the host membrane. Plays a role in the protection against host NK cell cytotoxicity by interacting with and modulating the activity of the host inhibitory leukocyte Ig-like receptor 1/LILRB1, which is expressed on monocytes, dendritic cells, as well as subsets of T and NK cells. UL18 exerts an inhibitory effect on LIR-1+ NK cells, while it stimulates LIR-1- NK cell. This is Membrane glycoprotein UL18 (UL18) from Homo sapiens (Human).